A 663-amino-acid chain; its full sequence is DNA ligase (663 aa).

NAD(+) contacts are provided by residues 31 to 35 (DFEYD), 80 to 81 (SL), and Glu110. Residue Lys112 is the N6-AMP-lysine intermediate of the active site. NAD(+) contacts are provided by Arg133, Glu168, Lys284, and Lys308. Zn(2+) is bound by residues Cys402, Cys405, Cys420, and Cys425. The 78-residue stretch at 586–663 (IKDNRFEGKT…DEDKFRKMIE (78 aa)) folds into the BRCT domain.

It belongs to the NAD-dependent DNA ligase family. LigA subfamily. The cofactor is Mg(2+). It depends on Mn(2+) as a cofactor.

The enzyme catalyses NAD(+) + (deoxyribonucleotide)n-3'-hydroxyl + 5'-phospho-(deoxyribonucleotide)m = (deoxyribonucleotide)n+m + AMP + beta-nicotinamide D-nucleotide.. Functionally, DNA ligase that catalyzes the formation of phosphodiester linkages between 5'-phosphoryl and 3'-hydroxyl groups in double-stranded DNA using NAD as a coenzyme and as the energy source for the reaction. It is essential for DNA replication and repair of damaged DNA. This chain is DNA ligase, found in Acetivibrio thermocellus (strain ATCC 27405 / DSM 1237 / JCM 9322 / NBRC 103400 / NCIMB 10682 / NRRL B-4536 / VPI 7372) (Clostridium thermocellum).